Reading from the N-terminus, the 326-residue chain is Thrombopoietin (326 aa).

The first 21 residues, 1 to 21, serve as a signal peptide directing secretion; the sequence is MELTDLLLVAILLLTARLTLS. Intrachain disulfides connect C28–C172 and C50–C106. 5 N-linked (GlcNAc...) asparagine glycosylation sites follow: N197, N206, N235, N249, and N256. The interval 307-326 is disordered; that stretch reads FPPSPTFPTPGSPPQLPPVS. Positions 308–326 are enriched in pro residues; the sequence is PPSPTFPTPGSPPQLPPVS.

Belongs to the EPO/TPO family.

Its subcellular location is the secreted. Its function is as follows. Lineage-specific cytokine affecting the proliferation and maturation of megakaryocytes from their committed progenitor cells. It acts at a late stage of megakaryocyte development. It may be the major physiological regulator of circulating platelets. This chain is Thrombopoietin (Thpo), found in Rattus norvegicus (Rat).